The primary structure comprises 337 residues: Transmembrane protein 120B (337 aa).

Positions Met1 to Ala39 form a coiled coil. The next 6 membrane-spanning stretches (helical) occupy residues Gly100 to Ala122, Phe130 to Asn150, Ile157 to Ile175, Gly185 to Pro205, Phe268 to Phe288, and Gln300 to Leu320.

The protein belongs to the TMEM120 family.

The protein localises to the nucleus inner membrane. In terms of biological role, necessary for efficient adipogenesis. Does not show ion channel activity. The sequence is that of Transmembrane protein 120B (tmem120b) from Danio rerio (Zebrafish).